The sequence spans 80 residues: Protein CEBPZOS (80 aa).

The helical transmembrane segment at 15–32 (GVLVAELVGVFGAYFLFS) threads the bilayer.

It localises to the mitochondrion membrane. The protein is Protein CEBPZOS of Homo sapiens (Human).